A 532-amino-acid polypeptide reads, in one-letter code: CTP synthase (532 aa).

The interval 1 to 267 is amidoligase domain; that stretch reads MTKYIFVTGG…DDIVLEHLQL (267 aa). Residue S13 participates in CTP binding. UTP is bound at residue S13. Position 14–19 (14–19) interacts with ATP; it reads SIGKGI. Y54 contributes to the L-glutamine binding site. D71 lines the ATP pocket. Residues D71 and E141 each contribute to the Mg(2+) site. CTP-binding positions include 148 to 150, 188 to 193, and K224; these read DIE and KTKPTQ. UTP-binding positions include 188 to 193 and K224; that span reads KTKPTQ. The Glutamine amidotransferase type-1 domain occupies 292–532; it reads RIGLVGKYVS…DFVGAALNNK (241 aa). G354 provides a ligand contact to L-glutamine. The active-site Nucleophile; for glutamine hydrolysis is the C381. L-glutamine-binding positions include 382 to 385, E405, and R462; that span reads LGMQ. Residues H507 and E509 contribute to the active site.

Belongs to the CTP synthase family. In terms of assembly, homotetramer.

The catalysed reaction is UTP + L-glutamine + ATP + H2O = CTP + L-glutamate + ADP + phosphate + 2 H(+). It catalyses the reaction L-glutamine + H2O = L-glutamate + NH4(+). It carries out the reaction UTP + NH4(+) + ATP = CTP + ADP + phosphate + 2 H(+). Its pathway is pyrimidine metabolism; CTP biosynthesis via de novo pathway; CTP from UDP: step 2/2. Allosterically activated by GTP, when glutamine is the substrate; GTP has no effect on the reaction when ammonia is the substrate. The allosteric effector GTP functions by stabilizing the protein conformation that binds the tetrahedral intermediate(s) formed during glutamine hydrolysis. Inhibited by the product CTP, via allosteric rather than competitive inhibition. Catalyzes the ATP-dependent amination of UTP to CTP with either L-glutamine or ammonia as the source of nitrogen. Regulates intracellular CTP levels through interactions with the four ribonucleotide triphosphates. This chain is CTP synthase, found in Listeria innocua serovar 6a (strain ATCC BAA-680 / CLIP 11262).